Consider the following 1009-residue polypeptide: Protein-tyrosine kinase 2-beta (1009 aa).

One can recognise an FERM domain in the interval 39-359 (RILKVCFYSN…GYCRLQGEHK (321 aa)). Phosphoserine occurs at positions 361, 375, and 399. Position 402 is a phosphotyrosine; by autocatalysis (Tyr-402). Positions 425–683 (VVLNRILGEG…ELVCSLSDIY (259 aa)) constitute a Protein kinase domain. Residues 431 to 439 (LGEGFFGEV), Lys-457, and 503 to 509 (ELYPYGE) contribute to the ATP site. Asp-549 serves as the catalytic Proton acceptor. Residue Tyr-579 is modified to Phosphotyrosine. Position 580 is a phosphotyrosine; by SRC, FYN and LCK (Tyr-580). Positions 696–728 (NARYRPPKILEPTTFQEPPPKPSRPKYRPPPQT) are disordered. The segment covering 712–727 (EPPPKPSRPKYRPPPQ) has biased composition (pro residues). Tyr-722 carries the phosphotyrosine modification. Ser-762 bears the Phosphoserine mark. Residue Thr-765 is modified to Phosphothreonine. The tract at residues 801 to 1009 (KIKMKQVLER…VANLAHPPAE (209 aa)) is interaction with TGFB1I1. Residue Tyr-834 is modified to Phosphotyrosine. Ser-839 is subject to Phosphoserine. Thr-842 carries the post-translational modification Phosphothreonine. A Phosphotyrosine modification is found at Tyr-849. Ser-866 carries the post-translational modification Phosphoserine. The interval 868–1009 (QPTANLDRTD…VANLAHPPAE (142 aa)) is focal adhesion targeting (FAT). Position 881 is a phosphotyrosine (Tyr-881).

The protein belongs to the protein kinase superfamily. Tyr protein kinase family. FAK subfamily. In terms of assembly, homodimer, or homooligomer. Interacts with KCNA2. Interacts with NPHP1, ASAP1, ASAP2, ARHGAP26, SKAP2 and TGFB1I1. The Tyr-402 phosphorylated form interacts with SRC (via SH2 domain) and SRC family members. Forms a signaling complex with EPHA1, LCK and phosphatidylinositol 3-kinase; upon activation by EFNA1. Interacts with GRB2 (via SH2 domain). Interacts with P53/TP53 and MDM2. Interacts with MYLK. Interacts with BCAR1. Interacts with RB1CC1. Interacts with RHOU. Interacts with VAV1. Interacts with PDPK1. Interacts with DLG4. Interacts with LPXN and PTPN12. Interacts with SIRPA and SH2D3C. Interacts (hypophosphorylated) with PXN. Interacts with ARHGAP10. Phosphorylated on tyrosine residues in response to various stimuli that elevate the intracellular calcium concentration; this activation is indirect and may be mediated by production of reactive oxygen species (ROS). Tyr-402 is the major autophosphorylation site, but other kinases can also phosphorylate Tyr-402. Autophosphorylation occurs in trans, i.e. one subunit of the dimeric receptor phosphorylates tyrosine residues on the other subunit. Phosphorylation at Tyr-402 promotes interaction with SRC and SRC family members, leading to phosphorylation at Tyr-579; Tyr-580 and Tyr-881. Phosphorylation at Tyr-881 is important for interaction with GRB2. Phosphorylated on tyrosine residues upon activation of FGR and PKC. Recruitment by NPHP1 to cell matrix adhesions initiates Tyr-402 phosphorylation. In monocytes, adherence to substrata is required for tyrosine phosphorylation and kinase activation. Angiotensin II, thapsigargin and L-alpha-lysophosphatidic acid (LPA) also induce autophosphorylation and increase kinase activity. Phosphorylation by MYLK promotes ITGB2 activation and is thus essential to trigger neutrophil transmigration during lung injury. Dephosphorylated by PTPN12.

The protein resides in the cytoplasm. It is found in the perinuclear region. Its subcellular location is the cell membrane. The protein localises to the cell junction. It localises to the focal adhesion. The protein resides in the cell projection. It is found in the lamellipodium. Its subcellular location is the cell cortex. The protein localises to the nucleus. It carries out the reaction L-tyrosyl-[protein] + ATP = O-phospho-L-tyrosyl-[protein] + ADP + H(+). Activated in response to stimuli that lead to increased intracellular Ca(2+) levels; this activation is indirect and may be mediated by calcium-mediated production of reactive oxygen species (ROS). Activated by autophosphorylation at Tyr-402; this creates a binding site for SRC family kinases and leads to phosphorylation at additional tyrosine residues. Phosphorylation at Tyr-402, Tyr-579 and Tyr-580 is required for optimal kinase activity. Non-receptor protein-tyrosine kinase that regulates reorganization of the actin cytoskeleton, cell polarization, cell migration, adhesion, spreading and bone remodeling. Plays a role in the regulation of the humoral immune response, and is required for normal levels of marginal B-cells in the spleen and normal migration of splenic B-cells. Required for normal macrophage polarization and migration towards sites of inflammation. Regulates cytoskeleton rearrangement and cell spreading in T-cells, and contributes to the regulation of T-cell responses. Promotes osteoclastic bone resorption; this requires both PTK2B/PYK2 and SRC. May inhibit differentiation and activity of osteoprogenitor cells. Functions in signaling downstream of integrin and collagen receptors, immune receptors, G-protein coupled receptors (GPCR), cytokine, chemokine and growth factor receptors, and mediates responses to cellular stress. Forms multisubunit signaling complexes with SRC and SRC family members upon activation; this leads to the phosphorylation of additional tyrosine residues, creating binding sites for scaffold proteins, effectors and substrates. Regulates numerous signaling pathways. Promotes activation of phosphatidylinositol 3-kinase and of the AKT1 signaling cascade. Promotes activation of NOS3. Regulates production of the cellular messenger cGMP. Promotes activation of the MAP kinase signaling cascade, including activation of MAPK1/ERK2, MAPK3/ERK1 and MAPK8/JNK1. Promotes activation of Rho family GTPases, such as RHOA and RAC1. Recruits the ubiquitin ligase MDM2 to P53/TP53 in the nucleus, and thereby regulates P53/TP53 activity, P53/TP53 ubiquitination and proteasomal degradation. Acts as a scaffold, binding to both PDPK1 and SRC, thereby allowing SRC to phosphorylate PDPK1 at 'Tyr-9, 'Tyr-373', and 'Tyr-376'. Promotes phosphorylation of NMDA receptors by SRC family members, and thereby contributes to the regulation of NMDA receptor ion channel activity and intracellular Ca(2+) levels. May also regulate potassium ion transport by phosphorylation of potassium channel subunits. Phosphorylates SRC; this increases SRC kinase activity. Phosphorylates ASAP1, NPHP1, KCNA2 and SHC1. Promotes phosphorylation of ASAP2, RHOU and PXN; this requires both SRC and PTK2/PYK2. The sequence is that of Protein-tyrosine kinase 2-beta (Ptk2b) from Mus musculus (Mouse).